The primary structure comprises 287 residues: MEGKEEDVRVGANKFPERQPIGTSAQSTDKDYKEPPPAPLFEPGELSSWSFYRAGIAEFIATFLFLYITVLTVMGVKRAPNMCASVGIQGIAWAFGGMIFALVYCTAGISGGHINPAVTFGLFLARKLSLTRAVFYMIMQCLGAICGAGVVKGFQPTPYQTLGGGANTVAHGYTKGSGLGAEIIGTFVLVYTVFSATDAKRSARDSHVPILAPLPIGFAVFLVHLATIPITGTGINPARSLGAAIIYNKDHSWDDHWIFWVGPFIGAALAALYHQIVIRAIPFKSKS.

M1 is subject to N-acetylmethionine. A disordered region spans residues 1 to 36 (MEGKEEDVRVGANKFPERQPIGTSAQSTDKDYKEPP). Residues 1-55 (MEGKEEDVRVGANKFPERQPIGTSAQSTDKDYKEPPPAPLFEPGELSSWSFYRAG) lie on the Cytoplasmic side of the membrane. The chain crosses the membrane as a helical span at residues 56-76 (IAEFIATFLFLYITVLTVMGV). Residues 77-92 (KRAPNMCASVGIQGIA) are Extracellular-facing. Residues 93 to 113 (WAFGGMIFALVYCTAGISGGH) form a helical membrane-spanning segment. Over 114 to 133 (INPAVTFGLFLARKLSLTRA) the chain is Cytoplasmic. Positions 115–117 (NPA) match the NPA 1 motif. The helical transmembrane segment at 134–154 (VFYMIMQCLGAICGAGVVKGF) threads the bilayer. At 155–175 (QPTPYQTLGGGANTVAHGYTK) the chain is on the extracellular side. Residues 176–196 (GSGLGAEIIGTFVLVYTVFSA) form a helical membrane-spanning segment. The Cytoplasmic portion of the chain corresponds to 197 to 209 (TDAKRSARDSHVP). The chain crosses the membrane as a helical span at residues 210–230 (ILAPLPIGFAVFLVHLATIPI). At 231 to 257 (TGTGINPARSLGAAIIYNKDHSWDDHW) the chain is on the extracellular side. The NPA 2 motif lies at 236-238 (NPA). A helical transmembrane segment spans residues 258-278 (IFWVGPFIGAALAALYHQIVI). The Cytoplasmic portion of the chain corresponds to 279-287 (RAIPFKSKS). S285 is subject to Phosphoserine.

It belongs to the MIP/aquaporin (TC 1.A.8) family. PIP (TC 1.A.8.11) subfamily. In terms of tissue distribution, predominantly expressed in roots and green siliques. Also expressed above ground and in flower buds.

The protein resides in the cell membrane. Aquaporins facilitate the transport of water and small neutral solutes across cell membranes. This Arabidopsis thaliana (Mouse-ear cress) protein is Probable aquaporin PIP1-4 (PIP1.4).